Reading from the N-terminus, the 197-residue chain is Proteasome subunit beta 1 (197 aa).

Positions 1 to 6 (MNRKTG) are cleaved as a propeptide — removed in mature form; by autocatalysis. The Nucleophile role is filled by T7.

This sequence belongs to the peptidase T1B family. In terms of assembly, the 20S proteasome core is composed of 14 alpha and 14 beta subunits that assemble into four stacked heptameric rings, resulting in a barrel-shaped structure. The two inner rings, each composed of seven catalytic beta subunits, are sandwiched by two outer rings, each composed of seven alpha subunits. The catalytic chamber with the active sites is on the inside of the barrel. Has a gated structure, the ends of the cylinder being occluded by the N-termini of the alpha-subunits. Is capped at one or both ends by the proteasome regulatory ATPase, PAN.

Its subcellular location is the cytoplasm. It carries out the reaction Cleavage of peptide bonds with very broad specificity.. The formation of the proteasomal ATPase PAN-20S proteasome complex, via the docking of the C-termini of PAN into the intersubunit pockets in the alpha-rings, triggers opening of the gate for substrate entry. Interconversion between the open-gate and close-gate conformations leads to a dynamic regulation of the 20S proteasome proteolysis activity. In terms of biological role, component of the proteasome core, a large protease complex with broad specificity involved in protein degradation. The sequence is that of Proteasome subunit beta 1 from Pyrococcus horikoshii (strain ATCC 700860 / DSM 12428 / JCM 9974 / NBRC 100139 / OT-3).